The chain runs to 98 residues: Acylphosphatase (98 aa).

Positions T12 to Q98 constitute an Acylphosphatase-like domain. Residues R27 and N45 contribute to the active site.

This sequence belongs to the acylphosphatase family.

It carries out the reaction an acyl phosphate + H2O = a carboxylate + phosphate + H(+). In Burkholderia ambifaria (strain ATCC BAA-244 / DSM 16087 / CCUG 44356 / LMG 19182 / AMMD) (Burkholderia cepacia (strain AMMD)), this protein is Acylphosphatase (acyP).